A 330-amino-acid chain; its full sequence is tRNA-modifying protein YgfZ (330 aa).

Residues Trp-28 and Trp-190 each coordinate folate.

This sequence belongs to the tRNA-modifying YgfZ family.

The protein localises to the cytoplasm. Its function is as follows. Folate-binding protein involved in regulating the level of ATP-DnaA and in the modification of some tRNAs. It is probably a key factor in regulatory networks that act via tRNA modification, such as initiation of chromosomal replication. The sequence is that of tRNA-modifying protein YgfZ from Yersinia pestis bv. Antiqua (strain Antiqua).